Consider the following 371-residue polypeptide: N-acetyldiaminopimelate deacetylase (371 aa).

Asp68 is a catalytic residue. The active-site Proton acceptor is the Glu127.

It belongs to the peptidase M20A family. N-acetyldiaminopimelate deacetylase subfamily.

It carries out the reaction N-acetyl-(2S,6S)-2,6-diaminopimelate + H2O = (2S,6S)-2,6-diaminopimelate + acetate. It participates in amino-acid biosynthesis; L-lysine biosynthesis via DAP pathway; LL-2,6-diaminopimelate from (S)-tetrahydrodipicolinate (acetylase route): step 3/3. Its function is as follows. Catalyzes the conversion of N-acetyl-diaminopimelate to diaminopimelate and acetate. The protein is N-acetyldiaminopimelate deacetylase of Oceanobacillus iheyensis (strain DSM 14371 / CIP 107618 / JCM 11309 / KCTC 3954 / HTE831).